A 275-amino-acid chain; its full sequence is Adaptin ear-binding coat-associated protein 1 (275 aa).

Residues 166–190 are disordered; that stretch reads ITTKKGGTSKPKTAGTGGLSLLPPP. The segment covering 167–179 has biased composition (low complexity); sequence TTKKGGTSKPKTA. Position 211 is a phosphothreonine (threonine 211). Residues 215–275 are disordered; the sequence is IPKSNHGGSD…APQPSNWVQF (61 aa). 2 consecutive short sequence motifs (WXXF motif) follow at residues 252 to 255 and 272 to 275; these read WGDF and WVQF. Positions 256 to 275 are enriched in polar residues; the sequence is STASSSVPNQAPQPSNWVQF.

The protein belongs to the NECAP family. Interacts with AP1G1 and AP2A1 components of the adapter protein complexes AP-1 and AP-2. Interacts with the GAE domain proteins GGA1, GGA2 and GGA3.

Its subcellular location is the cytoplasmic vesicle. It localises to the clathrin-coated vesicle membrane. The protein localises to the cell membrane. In terms of biological role, involved in endocytosis. The protein is Adaptin ear-binding coat-associated protein 1 (NECAP1) of Bos taurus (Bovine).